A 1075-amino-acid polypeptide reads, in one-letter code: DNA-directed RNA polymerase subunit beta (1075 aa).

This sequence belongs to the RNA polymerase beta chain family. As to quaternary structure, in plastids the minimal PEP RNA polymerase catalytic core is composed of four subunits: alpha, beta, beta', and beta''. When a (nuclear-encoded) sigma factor is associated with the core the holoenzyme is formed, which can initiate transcription.

It localises to the plastid. The protein localises to the chloroplast. It carries out the reaction RNA(n) + a ribonucleoside 5'-triphosphate = RNA(n+1) + diphosphate. DNA-dependent RNA polymerase catalyzes the transcription of DNA into RNA using the four ribonucleoside triphosphates as substrates. This Oryza sativa (Rice) protein is DNA-directed RNA polymerase subunit beta.